Reading from the N-terminus, the 185-residue chain is Ribosome-recycling factor (185 aa).

Belongs to the RRF family.

The protein localises to the cytoplasm. Responsible for the release of ribosomes from messenger RNA at the termination of protein biosynthesis. May increase the efficiency of translation by recycling ribosomes from one round of translation to another. The polypeptide is Ribosome-recycling factor (Neisseria meningitidis serogroup A / serotype 4A (strain DSM 15465 / Z2491)).